Consider the following 411-residue polypeptide: Putative binding protein BRA0748/BS1330_II0741 (411 aa).

The N-terminal stretch at 1-25 (MLIRKWKAGLLAGLSILALASSADA) is a signal peptide.

It belongs to the bacterial solute-binding protein 1 family. As to quaternary structure, the complex is composed of two ATP-binding proteins (BRA0745), two transmembrane proteins (BRA0749) and a solute-binding protein (BRA0748).

The protein resides in the periplasm. Its function is as follows. Probably part of an ABC transporter complex. In Brucella suis biovar 1 (strain 1330), this protein is Putative binding protein BRA0748/BS1330_II0741.